We begin with the raw amino-acid sequence, 662 residues long: Glutathione hydrolase 7 (662 aa).

Residues 1 to 106 (MAAENEASQE…AAECSCRQDG (106 aa)) are Cytoplasmic-facing. Phosphoserine is present on residues Ser-17, Ser-72, Ser-79, and Ser-83. The tract at residues 26–90 (SFPRLPEDEP…DGSPLRETRK (65 aa)) is disordered. Low complexity predominate over residues 72-83 (SSSSEMGSQDGS). Residues 107–127 (LTVIVTACLTFATGVTVALVM) form a helical; Signal-anchor for type II membrane protein membrane-spanning segment. Residues 128 to 662 (QIYFGDPQIF…SPDAAGATIL (535 aa)) lie on the Extracellular side of the membrane. Residues Asn-198, Asn-267, Asn-283, Asn-330, Asn-353, Asn-394, Asn-452, Asn-519, Asn-523, and Asn-586 are each glycosylated (N-linked (GlcNAc...) asparagine).

Belongs to the gamma-glutamyltransferase family. Interacts with TLCD3A. As to quaternary structure, heterodimer composed of the light and heavy chains. The active site is located in the light chain. In terms of processing, cleaved by autocatalysis into a large and a small subunit and the autocatalytic cleavage is essential to the functional activation of the enzyme. In terms of tissue distribution, widely expressed, but at low level, except in the airway epithelial cells. Detected in brain, heart, kidney, liver, lung, spleen, testis and trachea.

Its subcellular location is the membrane. It catalyses the reaction an N-terminal (5-L-glutamyl)-[peptide] + an alpha-amino acid = 5-L-glutamyl amino acid + an N-terminal L-alpha-aminoacyl-[peptide]. It carries out the reaction glutathione + H2O = L-cysteinylglycine + L-glutamate. The catalysed reaction is an S-substituted glutathione + H2O = an S-substituted L-cysteinylglycine + L-glutamate. Its pathway is sulfur metabolism; glutathione metabolism. Functionally, hydrolyzes and transfers gamma-glutamyl moieties from glutathione and other gamma-glutamyl compounds to acceptors. The polypeptide is Glutathione hydrolase 7 (Homo sapiens (Human)).